Consider the following 288-residue polypeptide: Coenzyme gamma-F420-2:alpha-L-glutamate ligase (288 aa).

One can recognise an ATP-grasp domain in the interval 101 to 287 (IKLLAKNKIK…IAEALVRYAK (187 aa)). ATP-binding positions include lysine 139, 173–186 (QEFI…LYRD), and arginine 202. Aspartate 245, glutamate 257, and asparagine 259 together coordinate Mn(2+).

This sequence belongs to the RimK family. CofF subfamily. In terms of assembly, monomer. Mn(2+) is required as a cofactor.

It carries out the reaction oxidized coenzyme F420-2 + L-glutamate + ATP = oxidized coenzyme alpha-F420-3 + ADP + phosphate + H(+). The protein operates within cofactor biosynthesis; coenzyme F420 biosynthesis. Its activity is regulated as follows. Inhibited by KCl. Its function is as follows. Catalyzes the ATP-dependent addition of one alpha-linked L-glutamate molecule to coenzyme gamma-F420-2, producing alpha-F420-3, the major form of coenzyme F420 found in M.jannaschii. Thus, caps the gamma-polyglutamate tail of coenzyme F420 with a terminal alpha-linked glutamate. Prefers ATP to other purine nucleotide triphosphates; GTP gives about 25% of the activity observed with ATP. Cannot catalyze the addition of the following amino acids or analogs: D-glutamate, beta-glutamate, L-aspartate, L-glutamine, L-alpha-aminoadipate, or D,L-2-amino-4-phosphono-butyrate. In Methanocaldococcus jannaschii (strain ATCC 43067 / DSM 2661 / JAL-1 / JCM 10045 / NBRC 100440) (Methanococcus jannaschii), this protein is Coenzyme gamma-F420-2:alpha-L-glutamate ligase (cofF).